We begin with the raw amino-acid sequence, 67 residues long: Large ribosomal subunit protein uL29 (67 aa).

Belongs to the universal ribosomal protein uL29 family.

The chain is Large ribosomal subunit protein uL29 from Gemmatimonas aurantiaca (strain DSM 14586 / JCM 11422 / NBRC 100505 / T-27).